The sequence spans 177 residues: MSRIGKKPVQVPAGITATVEGQKVTAKGPKGELFFVANDEISLKLENNAVVVTPVNQSKDARSKWGMSRTMIEGIFKGVKDGYERKLEINGVGYRAAMQGKNLQLALGFSHDVVYEPPVGISIAVPKPTEIIVSGINKQQVGQVAAEIREYRGPEPYKGKGVKYADERIVRKEGKKK.

This sequence belongs to the universal ribosomal protein uL6 family. As to quaternary structure, part of the 50S ribosomal subunit.

In terms of biological role, this protein binds to the 23S rRNA, and is important in its secondary structure. It is located near the subunit interface in the base of the L7/L12 stalk, and near the tRNA binding site of the peptidyltransferase center. This chain is Large ribosomal subunit protein uL6, found in Rhizobium etli (strain ATCC 51251 / DSM 11541 / JCM 21823 / NBRC 15573 / CFN 42).